A 347-amino-acid chain; its full sequence is Large ribosomal subunit protein uL3 (347 aa).

Residues 325-347 (RPPKKKPPVERPQITYISRESKQ) form a disordered region.

Belongs to the universal ribosomal protein uL3 family. Part of the 50S ribosomal subunit. Forms a cluster with proteins L14 and L24e.

In terms of biological role, one of the primary rRNA binding proteins, it binds directly near the 3'-end of the 23S rRNA, where it nucleates assembly of the 50S subunit. In Thermococcus onnurineus (strain NA1), this protein is Large ribosomal subunit protein uL3.